We begin with the raw amino-acid sequence, 295 residues long: MQNDAFKSKVLIESLPYFRQFSGETVVIKYGGNAMIDESLKQAFALNIVLLKYVGVNPVVVHGGGPQIGRMLQQLNIPTNFREGLRVTDDATMDVVEMVLVGKVNKQIVNLLNLSGAKAVGLSGKDGQLIRARQMEMVISKEAQAPEIIDLGKVGEVTGVETKLLHSLQRDGFIPVIAPVGVDENGETYNINADLVAGAVAGALGAKRLLLLTDVPGILDKDGRLISSLDTARTMQLFEDGTLKGGMLPKVKCCLEALEDGVEKAMIIDGRIENCVLLELFTDHGIGTEITRACS.

Substrate contacts are provided by residues 64–65, Arg86, and Asn190; that span reads GG.

The protein belongs to the acetylglutamate kinase family. ArgB subfamily.

The protein localises to the cytoplasm. It carries out the reaction N-acetyl-L-glutamate + ATP = N-acetyl-L-glutamyl 5-phosphate + ADP. The protein operates within amino-acid biosynthesis; L-arginine biosynthesis; N(2)-acetyl-L-ornithine from L-glutamate: step 2/4. In terms of biological role, catalyzes the ATP-dependent phosphorylation of N-acetyl-L-glutamate. The chain is Acetylglutamate kinase from Oleidesulfovibrio alaskensis (strain ATCC BAA-1058 / DSM 17464 / G20) (Desulfovibrio alaskensis).